The primary structure comprises 881 residues: Valine--tRNA ligase (881 aa).

The short motif at 49 to 59 (PNVTGKLHLGH) is the 'HIGH' region element. The short motif at 526–530 (KMSKS) is the 'KMSKS' region element. Residue Lys-529 coordinates ATP. Residues 810–881 (LADLINLDEE…VRQRLADLEK (72 aa)) are a coiled coil.

It belongs to the class-I aminoacyl-tRNA synthetase family. ValS type 1 subfamily. As to quaternary structure, monomer.

It is found in the cytoplasm. The catalysed reaction is tRNA(Val) + L-valine + ATP = L-valyl-tRNA(Val) + AMP + diphosphate. Its function is as follows. Catalyzes the attachment of valine to tRNA(Val). As ValRS can inadvertently accommodate and process structurally similar amino acids such as threonine, to avoid such errors, it has a 'posttransfer' editing activity that hydrolyzes mischarged Thr-tRNA(Val) in a tRNA-dependent manner. The sequence is that of Valine--tRNA ligase from Bacillus thuringiensis subsp. konkukian (strain 97-27).